A 204-amino-acid chain; its full sequence is Probable GTP-binding protein EngB (204 aa).

The region spanning 27 to 201 (SGIEIAFAGR…SEKLDQWFSP (175 aa)) is the EngB-type G domain. GTP is bound by residues 35 to 42 (GRSNAGKS), 62 to 66 (GRTQL), 80 to 83 (DLPG), 147 to 150 (TKAD), and 180 to 182 (FSA). Positions 42 and 64 each coordinate Mg(2+).

The protein belongs to the TRAFAC class TrmE-Era-EngA-EngB-Septin-like GTPase superfamily. EngB GTPase family. Mg(2+) is required as a cofactor.

Necessary for normal cell division and for the maintenance of normal septation. This is Probable GTP-binding protein EngB from Histophilus somni (strain 129Pt) (Haemophilus somnus).